Reading from the N-terminus, the 75-residue chain is uncharacterized protein (75 aa).

A helical membrane pass occupies residues 44–64 (IINMIVIWAALIALFVKLYIL).

It localises to the host membrane. This is an uncharacterized protein from Ostreid herpesvirus 1 (isolate France) (OsHV-1).